The chain runs to 543 residues: Headcase protein homolog (543 aa).

2 disordered regions span residues Met1–Gly26 and Met197–Ala283. 2 stretches are compositionally biased toward basic and acidic residues: residues Met197–Thr211 and Pro235–Ser250. A phosphoserine mark is found at Ser264 and Ser268.

Expressed in all tissues examined. Highest levels are in the spleen, thymus, peripheral blood and heart. Lowest in the kidney and pancreas.

In terms of biological role, may play an important role in some human cancers. May be part of the regulatory mechanism in the development of epithelial tube networks such as the circulatory system and lungs. The chain is Headcase protein homolog (HECA) from Homo sapiens (Human).